The chain runs to 483 residues: Beta-glucosidase 4 (483 aa).

A beta-D-glucoside contacts are provided by residues Q29, H131, 176–177 (NE), Y310, and E380. E177 functions as the Proton donor in the catalytic mechanism. Residue E380 is the Nucleophile of the active site. N398 carries N-linked (GlcNAc...) asparagine glycosylation. A beta-D-glucoside is bound by residues W429, 436 to 437 (EW), and F445.

This sequence belongs to the glycosyl hydrolase 1 family.

It carries out the reaction Hydrolysis of terminal, non-reducing beta-D-glucosyl residues with release of beta-D-glucose.. This chain is Beta-glucosidase 4 (BGLU4), found in Oryza sativa subsp. japonica (Rice).